The sequence spans 440 residues: tRNA-2-methylthio-N(6)-dimethylallyladenosine synthase (440 aa).

Residues 3 to 119 (KKFFIKTFGC…LPELINQAQA (117 aa)) enclose the MTTase N-terminal domain. Positions 12, 48, 82, 158, 162, and 165 each coordinate [4Fe-4S] cluster. Residues 144–374 (RDNKYCAYVT…LELQKSILSE (231 aa)) form the Radical SAM core domain. The 61-residue stretch at 377–437 (KKYEGTVQEV…PFSLEGELLE (61 aa)) folds into the TRAM domain.

The protein belongs to the methylthiotransferase family. MiaB subfamily. As to quaternary structure, monomer. [4Fe-4S] cluster serves as cofactor.

It localises to the cytoplasm. The enzyme catalyses N(6)-dimethylallyladenosine(37) in tRNA + (sulfur carrier)-SH + AH2 + 2 S-adenosyl-L-methionine = 2-methylsulfanyl-N(6)-dimethylallyladenosine(37) in tRNA + (sulfur carrier)-H + 5'-deoxyadenosine + L-methionine + A + S-adenosyl-L-homocysteine + 2 H(+). Its function is as follows. Catalyzes the methylthiolation of N6-(dimethylallyl)adenosine (i(6)A), leading to the formation of 2-methylthio-N6-(dimethylallyl)adenosine (ms(2)i(6)A) at position 37 in tRNAs that read codons beginning with uridine. This chain is tRNA-2-methylthio-N(6)-dimethylallyladenosine synthase, found in Aquifex aeolicus (strain VF5).